Consider the following 196-residue polypeptide: MSKVLVLKSSILGDFSQSGRLIDEWVAARRASGDTVTVRDLAAEPLPVLDGEIASGLRGGESLSPRQQEALALSDALIAELKVHDQLVVAAPMYNFSIPTQLKNWIDLVARAGVTFTYTAEGPQGLIQGKQAMLITTRGGVHKGSGSDHVVPYLKTVLGFIGITDVDTVYAEALSMGPEAAERGIKDARDQLALVG.

Residues S10, 16–18 (SQS), 93–96 (MYNF), and 137–140 (TRGG) each bind FMN.

It belongs to the azoreductase type 1 family. In terms of assembly, homodimer. FMN is required as a cofactor.

The enzyme catalyses 2 a quinone + NADH + H(+) = 2 a 1,4-benzosemiquinone + NAD(+). The catalysed reaction is N,N-dimethyl-1,4-phenylenediamine + anthranilate + 2 NAD(+) = 2-(4-dimethylaminophenyl)diazenylbenzoate + 2 NADH + 2 H(+). Functionally, quinone reductase that provides resistance to thiol-specific stress caused by electrophilic quinones. Also exhibits azoreductase activity. Catalyzes the reductive cleavage of the azo bond in aromatic azo compounds to the corresponding amines. This chain is FMN-dependent NADH:quinone oxidoreductase, found in Shewanella amazonensis (strain ATCC BAA-1098 / SB2B).